A 307-amino-acid polypeptide reads, in one-letter code: UDP-3-O-acyl-N-acetylglucosamine deacetylase (307 aa).

The Zn(2+) site is built by His79, His239, and Asp243. His266 (proton donor) is an active-site residue.

The protein belongs to the LpxC family. It depends on Zn(2+) as a cofactor.

It carries out the reaction a UDP-3-O-[(3R)-3-hydroxyacyl]-N-acetyl-alpha-D-glucosamine + H2O = a UDP-3-O-[(3R)-3-hydroxyacyl]-alpha-D-glucosamine + acetate. Its pathway is glycolipid biosynthesis; lipid IV(A) biosynthesis; lipid IV(A) from (3R)-3-hydroxytetradecanoyl-[acyl-carrier-protein] and UDP-N-acetyl-alpha-D-glucosamine: step 2/6. Functionally, catalyzes the hydrolysis of UDP-3-O-myristoyl-N-acetylglucosamine to form UDP-3-O-myristoylglucosamine and acetate, the committed step in lipid A biosynthesis. The sequence is that of UDP-3-O-acyl-N-acetylglucosamine deacetylase from Tolumonas auensis (strain DSM 9187 / NBRC 110442 / TA 4).